Consider the following 712-residue polypeptide: Transcriptional regulator GZF3 (712 aa).

Over residues 1–13 (MSMSDIQQRPQIP) the composition is skewed to polar residues. Disordered stretches follow at residues 1-20 (MSMS…TAAV), 27-135 (NVNT…GPVC), 173-280 (SLKT…HHHL), 377-533 (DVSS…GNNF), and 596-712 (LNNN…KVKI). Low complexity-rich tracts occupy residues 27–84 (NVNT…EQSS) and 107–131 (PKTG…ISMS). The GATA-type zinc-finger motif lies at 135–159 (CGNCQTQTTPLWRRDETGQVLCNAC). Positions 186–199 (KQNGSNSQSSKSSG) are enriched in low complexity. Over residues 213–223 (GKKSPKSKKKS) the composition is skewed to basic residues. Positions 246–261 (ATSNNTPTFKSTTSQS) are enriched in polar residues. Positions 268-280 (NHHHQHHNHHHHL) are enriched in basic residues. Positions 379-414 (SSINGSSTSLSSSSASSSIFSSVAPSTSSSSSLSNG) are enriched in low complexity. 2 stretches are compositionally biased toward polar residues: residues 429-447 (SKIS…TPLQ) and 484-498 (QQSM…RSPI). Composition is skewed to low complexity over residues 499–532 (NGNQ…NGNN) and 596–616 (LNNN…QPQQ). Residues 545 to 598 (TRISELELVNDLYRTRIMELEAMEQAARLRENSMKKRLDEVMNLQINYQNLLNN) are a coiled coil. Positions 631 to 667 (DQGSQSISPNVSITGSTTITSPNSRSKIISETTPTHH) are enriched in polar residues.

The protein localises to the nucleus. In terms of biological role, probable transcription factor involved in response to fluconazole, LiCl, and copper. This Candida albicans (strain SC5314 / ATCC MYA-2876) (Yeast) protein is Transcriptional regulator GZF3 (GZF3).